An 848-amino-acid polypeptide reads, in one-letter code: ATP-dependent Clp protease ATP-binding subunit ClpC1 (848 aa).

One can recognise a Clp R domain in the interval 2 to 144 (FERFTDRARR…RQQVIQLLSG (143 aa)). 2 repeat regions span residues 5 to 70 (FTDR…IGQG) and 80 to 144 (FTPR…LLSG). The interval 171-418 (LDQFGRNLTA…RMRIRRMTAP (248 aa)) is i. 216-223 (GEPGVGKT) serves as a coordination point for ATP. One can recognise a UVR domain in the interval 425-460 (DEKIAEARREKESAIDAQDFEKAASLRDREKTLVAQ). The II stretch occupies residues 479-670 (VDDEQIAEVL…VLIFTSNLGT (192 aa)). Position 553 to 560 (553 to 560 (GPSGVGKT)) interacts with ATP. The tract at residues 821–848 (TGTRKPPAEPDLAKAGAHSAGGPEPAAR) is disordered.

Belongs to the ClpA/ClpB family. ClpC subfamily.

ATP-dependent specificity component of the Clp protease. It directs the protease to specific substrates. Can perform chaperone functions in the absence of ClpP. Degrades anti-sigma-E factor RseA in the presence of ClpP2. This is ATP-dependent Clp protease ATP-binding subunit ClpC1 (clpC1) from Mycobacterium tuberculosis (strain ATCC 25618 / H37Rv).